We begin with the raw amino-acid sequence, 357 residues long: MNAPTVLIMAGGTGGHIMPGLAVADVLRERGWRVLWLGNPDKMEGRLVPPRGIDLVPMHFQGVRGRGVAAMLKLPFLLLRACSQAWGHLTRVRPDVVLGMGGYVAFPGGMMAALRGLPLVVHEQNAVAGTANRWLARLARRVLSGFPDVLPRGEVLGNPVRRDVCALPGPADRYAGRTGPLRMLVVGGSLGAHALNTTLPRALALIDPQARPQVIHQAGAQHQQSLREAYAQAGVPADCRDFIEDMADAMGQADLLVCRAGAMTVAEVAAAGVAALFVPFPHAIDDHQTANARFLSDAQAAWLCPQGELTPEWLADWLRQRTRPELLAVAERARQHARPQAAADIADVCEQAARRPS.

UDP-N-acetyl-alpha-D-glucosamine contacts are provided by residues 13 to 15, Asn-125, Arg-161, Ser-189, Ile-243, and Gln-288; that span reads TGG.

Belongs to the glycosyltransferase 28 family. MurG subfamily.

The protein resides in the cell inner membrane. It carries out the reaction di-trans,octa-cis-undecaprenyl diphospho-N-acetyl-alpha-D-muramoyl-L-alanyl-D-glutamyl-meso-2,6-diaminopimeloyl-D-alanyl-D-alanine + UDP-N-acetyl-alpha-D-glucosamine = di-trans,octa-cis-undecaprenyl diphospho-[N-acetyl-alpha-D-glucosaminyl-(1-&gt;4)]-N-acetyl-alpha-D-muramoyl-L-alanyl-D-glutamyl-meso-2,6-diaminopimeloyl-D-alanyl-D-alanine + UDP + H(+). It participates in cell wall biogenesis; peptidoglycan biosynthesis. Functionally, cell wall formation. Catalyzes the transfer of a GlcNAc subunit on undecaprenyl-pyrophosphoryl-MurNAc-pentapeptide (lipid intermediate I) to form undecaprenyl-pyrophosphoryl-MurNAc-(pentapeptide)GlcNAc (lipid intermediate II). This chain is UDP-N-acetylglucosamine--N-acetylmuramyl-(pentapeptide) pyrophosphoryl-undecaprenol N-acetylglucosamine transferase, found in Bordetella petrii (strain ATCC BAA-461 / DSM 12804 / CCUG 43448).